Consider the following 285-residue polypeptide: Ribosomal RNA large subunit methyltransferase F (285 aa).

Belongs to the methyltransferase superfamily. METTL16/RlmF family.

The protein localises to the cytoplasm. It catalyses the reaction adenosine(1618) in 23S rRNA + S-adenosyl-L-methionine = N(6)-methyladenosine(1618) in 23S rRNA + S-adenosyl-L-homocysteine + H(+). Specifically methylates the adenine in position 1618 of 23S rRNA. The sequence is that of Ribosomal RNA large subunit methyltransferase F from Christiangramia forsetii (strain DSM 17595 / CGMCC 1.15422 / KT0803) (Gramella forsetii).